A 389-amino-acid chain; its full sequence is TelA-like protein SH1505 (389 aa).

The protein belongs to the TelA family.

The chain is TelA-like protein SH1505 from Staphylococcus haemolyticus (strain JCSC1435).